A 179-amino-acid chain; its full sequence is MEATSHPAVHPVAVPPQFQGAGPPAIQMKDFPGSPGTAGGLALRFTQFGFSLISLCIMVSIAGFSSVTAFCFLVATMVFQCIWSLCLGALDIYALLTQRSFRNPLIVSLFVVGDWVTSTMTFAGACAAAGITVLIDNDLEQCGPNHCGRFEAAAAMAFMSWTATTLSFCLSFWLLASCR.

The Cytoplasmic portion of the chain corresponds to 1 to 54 (MEATSHPAVHPVAVPPQFQGAGPPAIQMKDFPGSPGTAGGLALRFTQFGFSLIS). The next 2 membrane-spanning stretches (helical) occupy residues 55–75 (LCIM…FLVA) and 76–96 (TMVF…YALL). Residues 97-114 (TQRSFRNPLIVSLFVVGD) lie on the Cytoplasmic side of the membrane. Residues 115 to 135 (WVTSTMTFAGACAAAGITVLI) traverse the membrane as a helical segment. Over 136–154 (DNDLEQCGPNHCGRFEAAA) the chain is Extracellular. Residues 155 to 175 (AMAFMSWTATTLSFCLSFWLL) form a helical membrane-spanning segment. The Cytoplasmic segment spans residues 176 to 179 (ASCR).

This sequence belongs to the Casparian strip membrane proteins (CASP) family. In terms of assembly, homodimer and heterodimers.

It is found in the cell membrane. This is CASP-like protein 5A2 from Physcomitrium patens (Spreading-leaved earth moss).